The primary structure comprises 227 residues: Cytochrome c oxidase subunit 2 (227 aa).

Over 1–14 (MAYPFQLGLQDATS) the chain is Mitochondrial intermembrane. Residues 15-45 (PIMEELMNFHDHTLMIVFLISSLVLYIISLM) form a helical membrane-spanning segment. The Mitochondrial matrix segment spans residues 46–59 (LTTKLTHTSTMDAQ). The helical transmembrane segment at 60–87 (EVETIWTILPAVILILIALPSLRILYMM) threads the bilayer. Residues 88 to 227 (DEINNPVLTV…NFENWSTSMI (140 aa)) lie on the Mitochondrial intermembrane side of the membrane. Residues His161, Cys196, Glu198, Cys200, His204, and Met207 each contribute to the Cu cation site. A Mg(2+)-binding site is contributed by Glu198.

It belongs to the cytochrome c oxidase subunit 2 family. Component of the cytochrome c oxidase (complex IV, CIV), a multisubunit enzyme composed of 14 subunits. The complex is composed of a catalytic core of 3 subunits MT-CO1, MT-CO2 and MT-CO3, encoded in the mitochondrial DNA, and 11 supernumerary subunits COX4I, COX5A, COX5B, COX6A, COX6B, COX6C, COX7A, COX7B, COX7C, COX8 and NDUFA4, which are encoded in the nuclear genome. The complex exists as a monomer or a dimer and forms supercomplexes (SCs) in the inner mitochondrial membrane with NADH-ubiquinone oxidoreductase (complex I, CI) and ubiquinol-cytochrome c oxidoreductase (cytochrome b-c1 complex, complex III, CIII), resulting in different assemblies (supercomplex SCI(1)III(2)IV(1) and megacomplex MCI(2)III(2)IV(2)). Found in a complex with TMEM177, COA6, COX18, COX20, SCO1 and SCO2. Interacts with TMEM177 in a COX20-dependent manner. Interacts with COX20. Interacts with COX16. Cu cation is required as a cofactor.

It is found in the mitochondrion inner membrane. It carries out the reaction 4 Fe(II)-[cytochrome c] + O2 + 8 H(+)(in) = 4 Fe(III)-[cytochrome c] + 2 H2O + 4 H(+)(out). Its function is as follows. Component of the cytochrome c oxidase, the last enzyme in the mitochondrial electron transport chain which drives oxidative phosphorylation. The respiratory chain contains 3 multisubunit complexes succinate dehydrogenase (complex II, CII), ubiquinol-cytochrome c oxidoreductase (cytochrome b-c1 complex, complex III, CIII) and cytochrome c oxidase (complex IV, CIV), that cooperate to transfer electrons derived from NADH and succinate to molecular oxygen, creating an electrochemical gradient over the inner membrane that drives transmembrane transport and the ATP synthase. Cytochrome c oxidase is the component of the respiratory chain that catalyzes the reduction of oxygen to water. Electrons originating from reduced cytochrome c in the intermembrane space (IMS) are transferred via the dinuclear copper A center (CU(A)) of subunit 2 and heme A of subunit 1 to the active site in subunit 1, a binuclear center (BNC) formed by heme A3 and copper B (CU(B)). The BNC reduces molecular oxygen to 2 water molecules using 4 electrons from cytochrome c in the IMS and 4 protons from the mitochondrial matrix. The polypeptide is Cytochrome c oxidase subunit 2 (MT-CO2) (Apodemus mystacinus (Broad-toothed field mouse)).